Consider the following 65-residue polypeptide: Large ribosomal subunit protein bL35 (65 aa).

The protein belongs to the bacterial ribosomal protein bL35 family.

The polypeptide is Large ribosomal subunit protein bL35 (Thermotoga neapolitana (strain ATCC 49049 / DSM 4359 / NBRC 107923 / NS-E)).